The following is a 465-amino-acid chain: Cysteine--tRNA ligase (465 aa).

Cys27 provides a ligand contact to Zn(2+). The 'HIGH' region signature appears at Pro29–Asn39. Zn(2+) contacts are provided by Cys207, His232, and Glu236. The short motif at Lys264–Ser268 is the 'KMSKS' region element. An ATP-binding site is contributed by Lys267.

It belongs to the class-I aminoacyl-tRNA synthetase family. As to quaternary structure, monomer. Zn(2+) is required as a cofactor.

The protein resides in the cytoplasm. The enzyme catalyses tRNA(Cys) + L-cysteine + ATP = L-cysteinyl-tRNA(Cys) + AMP + diphosphate. This chain is Cysteine--tRNA ligase, found in Clostridioides difficile (strain 630) (Peptoclostridium difficile).